We begin with the raw amino-acid sequence, 305 residues long: Acetylglutamate kinase (305 aa).

Substrate is bound by residues Gly80–Gly81, Arg102, and Asn196.

This sequence belongs to the acetylglutamate kinase family. ArgB subfamily.

Its subcellular location is the cytoplasm. It catalyses the reaction N-acetyl-L-glutamate + ATP = N-acetyl-L-glutamyl 5-phosphate + ADP. It functions in the pathway amino-acid biosynthesis; L-arginine biosynthesis; N(2)-acetyl-L-ornithine from L-glutamate: step 2/4. Its function is as follows. Catalyzes the ATP-dependent phosphorylation of N-acetyl-L-glutamate. This chain is Acetylglutamate kinase, found in Chlorobium luteolum (strain DSM 273 / BCRC 81028 / 2530) (Pelodictyon luteolum).